Here is a 1087-residue protein sequence, read N- to C-terminus: Fanconi-associated nuclease 1 homolog (1087 aa).

6 disordered regions span residues 1 to 79, 104 to 154, 169 to 202, 459 to 486, 816 to 835, and 842 to 871; these read MKSN…TPIK, FQKA…PNNL, EFLL…NNIT, TQNS…NNNI, ITSD…EKEN, and SVKK…EEEI. Low complexity predominate over residues 41-79; that stretch reads TTTPPKTPTQPIRFTQNNNKENDKSNNNNNNNNTITPIK. A compositionally biased stretch (polar residues) spans 104–115; the sequence is FQKASTPSSPQI. Low complexity-rich tracts occupy residues 118–154, 182–202, and 467–485; these read KLPQ…PNNL, NTTT…NNIT, and NNNN…NNNN. Coiled coils occupy residues 419–490 and 830–874; these read WKSK…KEYD and KIEK…IIEI. A compositionally biased stretch (acidic residues) spans 848–871; it reads EQEEEEEEEEEGQGQEEEEEEEEI. 4 residues coordinate Mn(2+): E899, D1023, E1051, and V1052. Residues 961–1083 form the VRR-NUC domain; the sequence is DDLLILLNQS…GCDVEVCLVK (123 aa).

The protein belongs to the FAN1 family. The cofactor is Mn(2+). Mg(2+) serves as cofactor.

The catalysed reaction is Hydrolytically removes 5'-nucleotides successively from the 3'-hydroxy termini of 3'-hydroxy-terminated oligonucleotides.. Its function is as follows. Nuclease required for the repair of DNA interstrand cross-links (ICL). Acts as a 5'-3' exonuclease that anchors at a cut end of DNA and cleaves DNA successively at every third nucleotide, allowing to excise an ICL from one strand through flanking incisions. The protein is Fanconi-associated nuclease 1 homolog (mtmr15) of Dictyostelium discoideum (Social amoeba).